Reading from the N-terminus, the 522-residue chain is Maturase K (522 aa).

The protein belongs to the intron maturase 2 family. MatK subfamily.

The protein localises to the plastid. Its subcellular location is the chloroplast. Usually encoded in the trnK tRNA gene intron. Probably assists in splicing its own and other chloroplast group II introns. This Micranthus junceus (Micranthus plantagineus var. junceus) protein is Maturase K.